The following is a 502-amino-acid chain: Betaine aldehyde dehydrogenase, chloroplastic (502 aa).

A chloroplast-targeting transit peptide spans 1–7 (MAFPIPA). 240 to 245 (GSSATG) provides a ligand contact to NAD(+). The active-site Proton acceptor is E262. C296 functions as the Nucleophile in the catalytic mechanism.

This sequence belongs to the aldehyde dehydrogenase family. Homodimer.

Its subcellular location is the plastid. The protein localises to the chloroplast. It carries out the reaction betaine aldehyde + NAD(+) + H2O = glycine betaine + NADH + 2 H(+). The protein operates within amine and polyamine biosynthesis; betaine biosynthesis via choline pathway; betaine from betaine aldehyde: step 1/1. The polypeptide is Betaine aldehyde dehydrogenase, chloroplastic (Atriplex hortensis (Mountain spinach)).